The sequence spans 78 residues: Large ribosomal subunit protein bL28 (78 aa).

The protein belongs to the bacterial ribosomal protein bL28 family.

This is Large ribosomal subunit protein bL28 from Acinetobacter baylyi (strain ATCC 33305 / BD413 / ADP1).